Reading from the N-terminus, the 174-residue chain is MACGPGDLQSLTSPLSSARLDYQPSIEGPWLRACGQTNVSCRVVKGKLVEVGKWPWQVSILFLGTYICSGSLIHHQWVLTAAHCLQRFKDLSLYSVMVGVHQRPENSTQLPLTRMVIHKDFSNLMSQDIALLKLRDSISWSPFVQPVCLPNIKFKPSIGSMCWVIGWGTTGKKG.

The Peptidase S1 domain maps to 43–174; the sequence is VVKGKLVEVG…IGWGTTGKKG (132 aa). Cys68 and Cys84 are disulfide-bonded. Active-site charge relay system residues include His83 and Asp128.

Belongs to the peptidase S1 family.

The protein is Putative serine protease 46 of Homo sapiens (Human).